Here is a 308-residue protein sequence, read N- to C-terminus: MLCLQESGDCLRDQMRYMMRSLQDLKHLRRSCVAPPVGPPVRLRACKQLIAQRERRARLRISDASEASSYDSACCLSSSLEEEESASDPSAVSSPSSERSLEFDSGYSEASWQDEGVVLRRTKNIRVSSTACLRTNQLSNTRARPKSTSDACLESWTSFETASDPEDWTTSLLTRGRNRQPLVLGDNSFADLIHNWMDLPECPEQTELKHSSGRSFAKDFLVNIKRRIAGFSRSADGRRKSSDVTKLSKSIVPTKRLSCQIDVQHKMPFFYKSHTGLNELDTDYYQFSALMKSGSRTPIVCNDIIGYI.

Residues 81–105 (EEEESASDPSAVSSPSSERSLEFDS) form a disordered region. The span at 87 to 98 (SDPSAVSSPSSE) shows a compositional bias: low complexity. 2 inka box regions span residues 164-201 (DPED…DLPE) and 281-308 (DTDY…IGYI).

The protein belongs to the INKA family. In terms of assembly, interacts with pak4/pak5.

The protein resides in the nucleus. It localises to the cytoplasm. Functionally, inhibitor of the serine/threonine-protein kinase pak4/pak5. Acts by binding pak4/pak5 in a substrate-like manner, inhibiting the protein kinase activity. Required for the proper migration of neural crest cells during embryonic development, probably by inhibiting pak4/pak5. In Danio rerio (Zebrafish), this protein is PAK4-inhibitor inka1.